The following is a 341-amino-acid chain: Small ribosomal subunit biogenesis GTPase RsgA (341 aa).

Residues 112–268 (RQQLIAANLD…LIDTPGMREL (157 aa)) form the CP-type G domain. GTP contacts are provided by residues 157-160 (TKVD) and 210-218 (GSSGAGKST). C290, C295, H297, and C303 together coordinate Zn(2+).

This sequence belongs to the TRAFAC class YlqF/YawG GTPase family. RsgA subfamily. As to quaternary structure, monomer. Associates with 30S ribosomal subunit, binds 16S rRNA. Requires Zn(2+) as cofactor.

Its subcellular location is the cytoplasm. Functionally, one of several proteins that assist in the late maturation steps of the functional core of the 30S ribosomal subunit. Helps release RbfA from mature subunits. May play a role in the assembly of ribosomal proteins into the subunit. Circularly permuted GTPase that catalyzes slow GTP hydrolysis, GTPase activity is stimulated by the 30S ribosomal subunit. This chain is Small ribosomal subunit biogenesis GTPase RsgA, found in Xylella fastidiosa (strain Temecula1 / ATCC 700964).